A 200-amino-acid polypeptide reads, in one-letter code: Large ribosomal subunit protein uL4 (200 aa).

The segment at 42-65 (TRAQKTRSEVSGGGAKPWRQKGTG) is disordered.

Belongs to the universal ribosomal protein uL4 family. In terms of assembly, part of the 50S ribosomal subunit.

Its function is as follows. One of the primary rRNA binding proteins, this protein initially binds near the 5'-end of the 23S rRNA. It is important during the early stages of 50S assembly. It makes multiple contacts with different domains of the 23S rRNA in the assembled 50S subunit and ribosome. In terms of biological role, forms part of the polypeptide exit tunnel. This is Large ribosomal subunit protein uL4 from Vibrio parahaemolyticus serotype O3:K6 (strain RIMD 2210633).